The sequence spans 319 residues: tRNA(Ile)-lysidine synthase (319 aa).

S32–S37 lines the ATP pocket.

It belongs to the tRNA(Ile)-lysidine synthase family.

It localises to the cytoplasm. The catalysed reaction is cytidine(34) in tRNA(Ile2) + L-lysine + ATP = lysidine(34) in tRNA(Ile2) + AMP + diphosphate + H(+). Functionally, ligates lysine onto the cytidine present at position 34 of the AUA codon-specific tRNA(Ile) that contains the anticodon CAU, in an ATP-dependent manner. Cytidine is converted to lysidine, thus changing the amino acid specificity of the tRNA from methionine to isoleucine. In Chlamydia pneumoniae (Chlamydophila pneumoniae), this protein is tRNA(Ile)-lysidine synthase.